The sequence spans 204 residues: ATP phosphoribosyltransferase (204 aa).

The protein belongs to the ATP phosphoribosyltransferase family. Short subfamily. As to quaternary structure, heteromultimer composed of HisG and HisZ subunits.

The protein resides in the cytoplasm. It carries out the reaction 1-(5-phospho-beta-D-ribosyl)-ATP + diphosphate = 5-phospho-alpha-D-ribose 1-diphosphate + ATP. The protein operates within amino-acid biosynthesis; L-histidine biosynthesis; L-histidine from 5-phospho-alpha-D-ribose 1-diphosphate: step 1/9. Its function is as follows. Catalyzes the condensation of ATP and 5-phosphoribose 1-diphosphate to form N'-(5'-phosphoribosyl)-ATP (PR-ATP). Has a crucial role in the pathway because the rate of histidine biosynthesis seems to be controlled primarily by regulation of HisG enzymatic activity. In Leptospira biflexa serovar Patoc (strain Patoc 1 / Ames), this protein is ATP phosphoribosyltransferase.